Here is a 359-residue protein sequence, read N- to C-terminus: Molybdenum import ATP-binding protein ModC (359 aa).

The region spanning 1-233 (MSGLTVSIRG…IDAESEGGGV (233 aa)) is the ABC transporter domain. 32–39 (GHSGAGKT) is an ATP binding site. The Mop domain occupies 289–355 (AISIRNLLPV…VKAVSVDRAA (67 aa)).

It belongs to the ABC transporter superfamily. Molybdate importer (TC 3.A.1.8) family. In terms of assembly, the complex is composed of two ATP-binding proteins (ModC), two transmembrane proteins (ModB) and a solute-binding protein (ModA).

The protein localises to the cell inner membrane. It catalyses the reaction molybdate(out) + ATP + H2O = molybdate(in) + ADP + phosphate + H(+). In terms of biological role, part of the ABC transporter complex ModABC involved in molybdenum import. Responsible for energy coupling to the transport system. The protein is Molybdenum import ATP-binding protein ModC of Brucella suis biovar 1 (strain 1330).